The following is a 218-amino-acid chain: Redox-sensing transcriptional repressor Rex (218 aa).

A DNA-binding region (H-T-H motif) is located at residues 25 to 64 (WYLSYVQLLHADGCESVSSTRIARAVGVDASLVAKDLSYV). 99–104 (GVGSLG) contacts NAD(+).

Belongs to the transcriptional regulatory Rex family. As to quaternary structure, homodimer.

It is found in the cytoplasm. Functionally, modulates transcription in response to changes in cellular NADH/NAD(+) redox state. The sequence is that of Redox-sensing transcriptional repressor Rex from Porphyromonas gingivalis (strain ATCC BAA-308 / W83).